A 224-amino-acid chain; its full sequence is MINPVTNTQGVSPINTKYAEHVVKNIYPEIKHDYFNESPNIYDKKYISGITRGVAELKQEEFVNEKARRFSYMKTMYSVCPEAFEPISRNEASTPEGSWLTVISGKRPMGQFSVDSLYNPDLHALCELPDICCKIFPKENNDFLYIVVVYRNDSPLGEQRANRFIELYNIKRDIMQELNYELPELKAVKSEMIIAREMGEIFSYMPGEIDSYMKYINNKLSKIE.

The interval 49–52 is interaction with host proteins TAB2, TAB3 and ZRANB3; that stretch reads GITR. The S-adenosyl-L-methionine site is built by alanine 92, serine 98, arginine 107, glutamine 111, tyrosine 204, and glutamate 208.

It belongs to the NleE/OspZ family. In terms of assembly, monomer.

The protein localises to the secreted. It is found in the host nucleus. The catalysed reaction is L-cysteinyl-[protein] + S-adenosyl-L-methionine = S-methyl-L-cysteinyl-[protein] + S-adenosyl-L-homocysteine + H(+). Its function is as follows. Cysteine methyltransferase effector that inhibits host cell NF-kappa-B activation by preventing nuclear translocation of host protein RELA/p65. Acts by mediating cysteine methylation of host proteins TAB2 and TAB3: methylation of a conserved cysteine residue of the RanBP2-type zinc finger (NZF) of TAB2 and TAB3 disrupts zinc-binding, thereby inactivating the ubiquitin chain-binding activity of TAB2 and TAB3, leading to NF-kappa-B inactivation. Also mediates cysteine methylation of host protein ZRANB3, inactivating its ability to bind ubiquitin chains. The sequence is that of Cysteine S-methyltransferase NleE from Escherichia coli O157:H7.